Consider the following 195-residue polypeptide: Molybdopterin synthase catalytic subunit (195 aa).

A disordered region spans residues 1 to 37 (MSARPEPQPGSERNATEPLPSHLDPTTYPRTLTTTHG). A compositionally biased stretch (low complexity) spans 25–37 (PTTYPRTLTTTHG). Residues 141–142 (HR), K157, and 164–166 (KRE) contribute to the substrate site.

This sequence belongs to the MoaE family. MOCS2B subfamily. Heterotetramer; composed of 2 small (MOCS2A) and 2 large (MOCS2B) subunits.

It is found in the cytoplasm. It catalyses the reaction 2 [molybdopterin-synthase sulfur-carrier protein]-C-terminal-Gly-aminoethanethioate + cyclic pyranopterin phosphate + H2O = molybdopterin + 2 [molybdopterin-synthase sulfur-carrier protein]-C-terminal Gly-Gly + 2 H(+). It functions in the pathway cofactor biosynthesis; molybdopterin biosynthesis. Its function is as follows. Catalytic subunit of the molybdopterin synthase complex, a complex that catalyzes the conversion of precursor Z into molybdopterin. Acts by mediating the incorporation of 2 sulfur atoms from thiocarboxylated MOCS2A into precursor Z to generate a dithiolene group. The chain is Molybdopterin synthase catalytic subunit from Emericella nidulans (strain FGSC A4 / ATCC 38163 / CBS 112.46 / NRRL 194 / M139) (Aspergillus nidulans).